Reading from the N-terminus, the 168-residue chain is Photosystem I assembly protein Ycf3 (168 aa).

TPR repeat units follow at residues 35-68 (AFTY…EIDP), 72-105 (SYIL…NPFL), and 120-153 (GEQA…TPGN).

Belongs to the Ycf3 family.

The protein localises to the plastid. It is found in the chloroplast thylakoid membrane. In terms of biological role, essential for the assembly of the photosystem I (PSI) complex. May act as a chaperone-like factor to guide the assembly of the PSI subunits. The sequence is that of Photosystem I assembly protein Ycf3 from Gossypium barbadense (Sea Island cotton).